We begin with the raw amino-acid sequence, 252 residues long: Type III pantothenate kinase (252 aa).

6 to 13 is an ATP binding site; the sequence is DIGNTTTE. Residues Tyr-100 and 107–110 each bind substrate; that span reads GADR. Catalysis depends on Asp-109, which acts as the Proton acceptor. Asp-129 provides a ligand contact to K(+). Thr-132 provides a ligand contact to ATP. A substrate-binding site is contributed by Thr-184.

Belongs to the type III pantothenate kinase family. Homodimer. The cofactor is NH4(+). Requires K(+) as cofactor.

It localises to the cytoplasm. It catalyses the reaction (R)-pantothenate + ATP = (R)-4'-phosphopantothenate + ADP + H(+). It participates in cofactor biosynthesis; coenzyme A biosynthesis; CoA from (R)-pantothenate: step 1/5. Functionally, catalyzes the phosphorylation of pantothenate (Pan), the first step in CoA biosynthesis. In Sulfurihydrogenibium sp. (strain YO3AOP1), this protein is Type III pantothenate kinase.